Consider the following 103-residue polypeptide: Small ribosomal subunit protein uS10 (103 aa).

The protein belongs to the universal ribosomal protein uS10 family. As to quaternary structure, part of the 30S ribosomal subunit.

Involved in the binding of tRNA to the ribosomes. This is Small ribosomal subunit protein uS10 from Acinetobacter baumannii (strain AB307-0294).